Reading from the N-terminus, the 339-residue chain is Ornithine carbamoyltransferase, catabolic (339 aa).

Carbamoyl phosphate is bound by residues 57 to 60 (STRT), glutamine 84, arginine 108, and 135 to 138 (HPTQ). L-ornithine contacts are provided by residues asparagine 167, aspartate 231, and 235–236 (SM). Carbamoyl phosphate contacts are provided by residues 274-275 (CL) and arginine 319.

Belongs to the aspartate/ornithine carbamoyltransferase superfamily. OTCase family.

The protein localises to the cytoplasm. The catalysed reaction is carbamoyl phosphate + L-ornithine = L-citrulline + phosphate + H(+). Its pathway is amino-acid degradation; L-arginine degradation via ADI pathway; carbamoyl phosphate from L-arginine: step 2/2. In terms of biological role, reversibly catalyzes the transfer of the carbamoyl group from carbamoyl phosphate (CP) to the N(epsilon) atom of ornithine (ORN) to produce L-citrulline. This chain is Ornithine carbamoyltransferase, catabolic (arcB), found in Enterococcus faecalis (strain ATCC 700802 / V583).